An 893-amino-acid polypeptide reads, in one-letter code: Dystroglycan 1 (893 aa).

The N-terminal stretch at M1–A27 is a signal peptide. Residues H28 to P406 are required for laminin recognition. The interval S47–T69 is O-glycosylated at one site. A glycan (N-linked (GlcNAc...) asparagine) is linked at N139. C180 and C262 are oxidised to a cystine. Residues A314 to S483 are mucin-like domain. T315, T317, and T377 each carry an O-linked (Man6P...) threonine glycan. Residues T379–K498 form a disordered region. Residues V409–R445 show a composition bias toward low complexity. Positions T461–S483 are O-glycosylated at seven sites with GalNAc. Residues K601–S710 enclose the Peptidase S72 domain. N-linked (GlcNAc...) asparagine glycans are attached at residues N639, N647, and N659. At S652–T751 the chain is on the extracellular side. C667 and C711 form a disulfide bridge. Positions P722–E744 are disordered. The span at V734–E744 shows a compositional bias: basic and acidic residues. The chain crosses the membrane as a helical span at residues V752–C772. The Cytoplasmic segment spans residues Y773–P893. The short motif at R774–K780 is the Nuclear localization signal element. T788 carries the phosphothreonine modification. The interval L817–P893 is required for interaction with CAV3. The disordered stretch occupies residues K821–P893. Polar residues predominate over residues P830 to T844. Residues N857 to T868 are compositionally biased toward pro residues. Residues P878–P893 form a required for binding DMD and UTRN region. Residues P887 to Y890 carry the PPXY motif motif. Phosphotyrosine; by SRC is present on Y890.

Monomer. Heterodimer of alpha- and beta-dystroglycan subunits which are the central components of the dystrophin-glycoprotein complex. This complex then can form a dystrophin-associated glycoprotein complex (DGC) which is composed of three subcomplexes: a cytoplasmic complex comprised of DMD (or UTRN), DTNA and a number of syntrophins, such as SNTB1, SNTB2, SNTG1 and SNTG2, the transmembrane dystroglycan complex, and the sarcoglycan-sarcospan complex. Interacts (via the N-terminal of alphaDAG1) with LARGE1; the interaction enhances laminin binding. Interacts with SGCD. Interacts with AGR2 and AGR3. Interacts (betaDAG1) with DMD; the interaction is inhibited by phosphorylation on the PPXY motif. Interacts (betaDAG1, via its PPXY motif) with UTRN (via its WWW and ZZ domains); the interaction is inhibited by phosphorylation on the PPXY motif. Interacts (betaDAG1, via its phosphorylated PPXY motif) with the SH2 domain-containing proteins, FYN, CSK, NCK and SHC. Interacts (betaDAG1) with CAV3 (via a central WW-like domain); the interaction disrupts the binding of DMD. BetaDAG1 directly interacts with ANK3, but not with ANK2; this interaction does not interfere with DMD-binding and is required for retention at costameres. Identified in a dystroglycan complex that contains at least PRX, DRP2, UTRN, DMD and DAG1. Interacts with POMGNT1. BetaDAG1 interacts with CD93. Post-translationally, O-glycosylated. POMGNT1 catalyzes the initial addition of N-acetylglucosamine, giving rise to the GlcNAc(beta1-2)Man(alpha1-)O-Ser/Thr moiety and thus providing the necessary basis for the addition of further carbohydrate moieties. Heavily O-glycosylated comprising of up to two thirds of its mass and the carbohydrate composition differs depending on tissue type. Mucin-type O-glycosylation is important for ligand binding activity. O-mannosylation is found in high abundance in both brain and muscle where the most abundant glycan is Sia-alpha-2-3-Gal-beta-1-4-Glc-NAc-beta-1-2-Man. In muscle, glycosylation on Thr-315, Thr-317, Thr-379 by a phosphorylated O-mannosyl glycan with the structure 2-(N-acetylamido)-2-deoxygalactosyl-beta-1,3-2-(N-acetylamido)-2-deoxyglucosyl-beta-1,4-6-phosphomannose is mediated by like-acetylglucosaminyltransferase (LARGE1) protein amd is required for laminin binding. O-glycosylated in the N-terminal region with a core 1 or possibly core 8 glycan. The brain form displays a unique glycosylation pattern which is absent in other tissues; this form shows enhanced binding to laminin LAMA5 compared to the skeletal muscle form. N-glycosylated. In terms of processing, autolytic cleavage produces the alpha and beta subunits. In cutaneous cells, as well as in certain pathological conditions, shedding of beta-dystroglycan can occur releasing a peptide of about 30 kDa. Post-translationally, SRC-mediated phosphorylation of the PPXY motif of the beta subunit recruits SH2 domain-containing proteins, but inhibits binding to WWW domain-containing proteins, DMD and UTRN. This phosphorylation also inhibits nuclear entry. Detected in brain and kidney (at protein level). Detected in sciatic nerve (at protein level). Expressed in neurons and muscle cells (at protein level). Expressed in a variety of tissues. In brain, expressed in the hippocampal formation, the olfactory bulb, the cerebellum and the thalamus. In the peripheral nerve system, expressed in Schwann cells.

The protein localises to the secreted. It is found in the extracellular space. Its subcellular location is the cell membrane. It localises to the cytoplasm. The protein resides in the cytoskeleton. The protein localises to the nucleus. It is found in the nucleoplasm. Its subcellular location is the sarcolemma. It localises to the postsynaptic cell membrane. In terms of biological role, the dystroglycan complex is involved in a number of processes including laminin and basement membrane assembly, sarcolemmal stability, cell survival, peripheral nerve myelination, nodal structure, cell migration, and epithelial polarization. Functionally, extracellular peripheral glycoprotein that acts as a receptor for extracellular matrix proteins containing laminin-G domains, and for certain adenoviruses. Receptor for laminin-2 (LAMA2) and agrin in peripheral nerve Schwann cells. Also acts as a receptor for laminin LAMA5. Its function is as follows. Transmembrane protein that plays important roles in connecting the extracellular matrix to the cytoskeleton. Acts as a cell adhesion receptor in both muscle and non-muscle tissues. Receptor for both DMD and UTRN and, through these interactions, scaffolds axin to the cytoskeleton. Also functions in cell adhesion-mediated signaling and implicated in cell polarity. In Mus musculus (Mouse), this protein is Dystroglycan 1.